Reading from the N-terminus, the 187-residue chain is MPHSMPPAPAPIWLVQSRLSPFPGTAVANWLFDEGSLTRRLTRLSHNAFSVTPLVQEWQTLRNDECAALGLPEQSEGWVREVYLRGHGQAWVFARSVAARSALLEGGLNIDELGSRSLGELLFCDQAFTRQPIEVCRYPRHWLPAAVADNGLWGRRSRFDRGPLSLLVAEIFLPSLWTAIDARPEAC.

Substrate is bound by residues Arg-80, Leu-118, and Glu-170.

It belongs to the UbiC family.

It localises to the cytoplasm. It carries out the reaction chorismate = 4-hydroxybenzoate + pyruvate. The protein operates within cofactor biosynthesis; ubiquinone biosynthesis. Removes the pyruvyl group from chorismate, with concomitant aromatization of the ring, to provide 4-hydroxybenzoate (4HB) for the ubiquinone pathway. In Pseudomonas fluorescens (strain ATCC BAA-477 / NRRL B-23932 / Pf-5), this protein is Probable chorismate pyruvate-lyase.